Reading from the N-terminus, the 221-residue chain is uncharacterized protein (221 aa).

This is an uncharacterized protein from Archaeoglobus fulgidus (strain ATCC 49558 / DSM 4304 / JCM 9628 / NBRC 100126 / VC-16).